Reading from the N-terminus, the 134-residue chain is Large ribosomal subunit protein bL17 (134 aa).

Belongs to the bacterial ribosomal protein bL17 family. As to quaternary structure, part of the 50S ribosomal subunit. Contacts protein L32.

In Paracidovorax citrulli (strain AAC00-1) (Acidovorax citrulli), this protein is Large ribosomal subunit protein bL17.